We begin with the raw amino-acid sequence, 252 residues long: 5'-nucleotidase SurE (252 aa).

4 residues coordinate a divalent metal cation: aspartate 8, aspartate 9, serine 40, and asparagine 93.

It belongs to the SurE nucleotidase family. It depends on a divalent metal cation as a cofactor.

It localises to the cytoplasm. The enzyme catalyses a ribonucleoside 5'-phosphate + H2O = a ribonucleoside + phosphate. In terms of biological role, nucleotidase that shows phosphatase activity on nucleoside 5'-monophosphates. This is 5'-nucleotidase SurE from Erythrobacter litoralis (strain HTCC2594).